Consider the following 399-residue polypeptide: Argininosuccinate synthase (399 aa).

ATP is bound at residue 9–17 (AYSGGLDTS). An L-citrulline-binding site is contributed by Tyr85. Position 115 (Gly115) interacts with ATP. Positions 117, 121, and 122 each coordinate L-aspartate. Residue Asn121 coordinates L-citrulline. L-citrulline is bound by residues Arg125, Ser173, Glu258, and Tyr270.

The protein belongs to the argininosuccinate synthase family. Type 1 subfamily. Homotetramer.

It is found in the cytoplasm. The catalysed reaction is L-citrulline + L-aspartate + ATP = 2-(N(omega)-L-arginino)succinate + AMP + diphosphate + H(+). Its pathway is amino-acid biosynthesis; L-arginine biosynthesis; L-arginine from L-ornithine and carbamoyl phosphate: step 2/3. This is Argininosuccinate synthase from Streptococcus thermophilus (strain CNRZ 1066).